Consider the following 487-residue polypeptide: Meiotic recombination protein SPO11-4 (487 aa).

The tract at residues M1–G56 is disordered. The Topo IIA-type catalytic domain maps to K119–I252. Y213 (O-(5'-phospho-DNA)-tyrosine intermediate) is an active-site residue. Mg(2+) contacts are provided by E301 and D353.

It belongs to the TOP6A family. Homodimer. Interacts with TOP6B. Requires Mg(2+) as cofactor.

It is found in the nucleus. The enzyme catalyses ATP-dependent breakage, passage and rejoining of double-stranded DNA.. In terms of biological role, required for meiotic recombination. Mediates DNA cleavage that forms the double-strand breaks (DSB) that initiate meiotic recombination. Possesses double-stranded DNA cleavage activity in vitro. This is Meiotic recombination protein SPO11-4 (SPO11-4) from Oryza sativa subsp. japonica (Rice).